Consider the following 557-residue polypeptide: MVSKLTSLQQELLSALLSSGVTKEVLIQALEELLPSPNFGVKLETLPLSPGSGADLDTKPVFHTLTNGHAKGRLSGDEGSEDGDDYDTPPILKELQALNTEEAAEQRAEVDRMLSEDPWRAAKMIKGYMQQHNIPQREVVDVTGLNQSHLSQHLNKGTPMKTQKRAALYTWYVRKQREILRQFNQTVQSSGNMTDKSSQDQLLFLFPEFSQQNQGPGQSEDACSEPTNKKMRRNRFKWGPASQQILYQAYDRQKNPSKEEREALVEECNRAECLQRGVSPSKAHGLGSNLVTEVRVYNWFANRRKEEAFRQKLAMDAYSSNQTHNLNPLLTHGSPHHQPSSSPPNKLSGVRYSQPGNNEVTSSSTISHHGNSAMVTSQSVLQQVSPASLDPGHSLLSPDSKMISVSGGGLPPVSTLTNIHSLSHHNPQQSQNLIMTPLSGVMAIAQSLNTSQAQGVPVINSVASSLAALQPVQFSQQLHSPHQQPLMQQSPGSHMAQQPFMAAVTQLQNSHMYAHKQEPPQYSHTSRFPSAMVVTDTSSINTLTSMSSSKQCPLQAW.

Residues 1-31 (MVSKLTSLQQELLSALLSSGVTKEVLIQALE) form a dimerization region. Residues 1-32 (MVSKLTSLQQELLSALLSSGVTKEVLIQALEE) enclose the HNF-p1 domain. A phosphoserine mark is found at Ser-49, Ser-52, Ser-75, and Ser-80. The interval 66–85 (TNGHAKGRLSGDEGSEDGDD) is disordered. The region spanning 93–188 (KELQALNTEE…ILRQFNQTVQ (96 aa)) is the POU-specific atypical domain. The homeobox; HNF1-type DNA-binding region spans 231-311 (MRRNRFKWGP…NRRKEEAFRQ (81 aa)). The segment at 324-370 (HNLNPLLTHGSPHHQPSSSPPNKLSGVRYSQPGNNEVTSSSTISHHG) is disordered. A compositionally biased stretch (polar residues) spans 354–370 (QPGNNEVTSSSTISHHG).

Belongs to the HNF1 homeobox family. In terms of assembly, binds DNA as a dimer. Can form homodimer or heterodimer with HNF1-alpha. Interacts (via HNF-p1 domain) with PCBD1; the interaction increases its transactivation activity. Liver, kidney and intestine.

The protein resides in the nucleus. Transcription factor that binds to the inverted palindrome 5'-GTTAATNATTAAC-3'. Binds to the FPC element in the cAMP regulatory unit of the PLAU gene. Transcriptional activity is increased by coactivator PCBD1. The sequence is that of Hepatocyte nuclear factor 1-beta (Hnf1b) from Rattus norvegicus (Rat).